The following is a 375-amino-acid chain: Serpin B5 (375 aa).

N-linked (GlcNAc...) asparagine glycans are attached at residues asparagine 99, asparagine 133, asparagine 155, asparagine 188, and asparagine 361.

This sequence belongs to the serpin family. Ov-serpin subfamily. In terms of assembly, interacts with IRF6.

Its subcellular location is the secreted. The protein localises to the extracellular space. Tumor suppressor. It blocks the growth, invasion, and metastatic properties of mammary tumors. As it does not undergo the S (stressed) to R (relaxed) conformational transition characteristic of active serpins, it exhibits no serine protease inhibitory activity. The chain is Serpin B5 (SERPINB5) from Plecturocebus moloch (Dusky titi monkey).